Here is a 128-residue protein sequence, read N- to C-terminus: Glyoxylase-like domain-containing protein (128 aa).

The 120-residue stretch at 6–125 folds into the VOC domain; sequence QISGIEIPAT…EGNTHAICTR (120 aa).

The protein operates within mycotoxin biosynthesis. In terms of biological role, glyoxylase-like domain-containing protein; part of the gene cluster that mediates the biosynthesis of the selective antifungal agent ascochitine, an o-quinone methide that plays a possible protective role against other microbial competitors in nature and is considered to be important for pathogenicity of legume-associated Didymella species. The pathway probably begins with the synthesis of a keto-aldehyde intermediate by the ascochitine non-reducing polyketide synthase pksAC from successive condensations of 4 malonyl-CoA units, presumably with a simple acetyl-CoA starter unit. Release of the keto-aldehyde intermediate is consistent with the presence of the C-terminal reductive release domain. The HR-PKS (orf7) probably makes a diketide starter unit which is passed to the non-reducing polyketide synthase pksAC for further extension, producing ascochital and ascochitine. The aldehyde dehydrogenase (orf1), the 2-oxoglutarate-dependent dioxygenase (orf3) and the dehydrogenase (orf9) are probably involved in subsequent oxidations of methyl groups to the carboxylic acid of the heterocyclic ring. The ascochitine gene cluster also includes a gene encoding a short peptide with a cupin domain (orf2) that is often found in secondary metabolite gene clusters and which function has still to be determined. The sequence is that of Glyoxylase-like domain-containing protein from Didymella fabae (Leaf and pod spot disease fungus).